Here is a 515-residue protein sequence, read N- to C-terminus: Ribose import ATP-binding protein RbsA 1 (515 aa).

ABC transporter domains are found at residues 8–244 (FQME…IGRE) and 256–503 (VPAT…LNIH). An ATP-binding site is contributed by 40–47 (GENGAGKS).

Belongs to the ABC transporter superfamily. Ribose importer (TC 3.A.1.2.1) family. The complex is composed of an ATP-binding protein (RbsA), two transmembrane proteins (RbsC) and a solute-binding protein (RbsB).

The protein localises to the cell inner membrane. It catalyses the reaction D-ribose(out) + ATP + H2O = D-ribose(in) + ADP + phosphate + H(+). Functionally, part of the ABC transporter complex RbsABC involved in ribose import. Responsible for energy coupling to the transport system. In Mesorhizobium japonicum (strain LMG 29417 / CECT 9101 / MAFF 303099) (Mesorhizobium loti (strain MAFF 303099)), this protein is Ribose import ATP-binding protein RbsA 1.